A 1408-amino-acid chain; its full sequence is DNA-directed RNA polymerase subunit beta' (1408 aa).

Zn(2+)-binding residues include C70, C72, C85, and C88. 3 residues coordinate Mg(2+): D460, D462, and D464. The Zn(2+) site is built by C814, C888, C895, and C898.

The protein belongs to the RNA polymerase beta' chain family. In terms of assembly, the RNAP catalytic core consists of 2 alpha, 1 beta, 1 beta' and 1 omega subunit. When a sigma factor is associated with the core the holoenzyme is formed, which can initiate transcription. It depends on Mg(2+) as a cofactor. The cofactor is Zn(2+).

It catalyses the reaction RNA(n) + a ribonucleoside 5'-triphosphate = RNA(n+1) + diphosphate. Functionally, DNA-dependent RNA polymerase catalyzes the transcription of DNA into RNA using the four ribonucleoside triphosphates as substrates. The polypeptide is DNA-directed RNA polymerase subunit beta' (Baumannia cicadellinicola subsp. Homalodisca coagulata).